Consider the following 207-residue polypeptide: Large ribosomal subunit protein uL4 (207 aa).

Residues E56–G76 form a disordered region. Residues G60–G71 show a composition bias toward basic residues.

This sequence belongs to the universal ribosomal protein uL4 family. In terms of assembly, part of the 50S ribosomal subunit.

Its function is as follows. One of the primary rRNA binding proteins, this protein initially binds near the 5'-end of the 23S rRNA. It is important during the early stages of 50S assembly. It makes multiple contacts with different domains of the 23S rRNA in the assembled 50S subunit and ribosome. Forms part of the polypeptide exit tunnel. The polypeptide is Large ribosomal subunit protein uL4 (Desulfitobacterium hafniense (strain Y51)).